The chain runs to 93 residues: Small ribosomal subunit protein uS17 (93 aa).

The protein belongs to the universal ribosomal protein uS17 family. In terms of assembly, part of the 30S ribosomal subunit.

Functionally, one of the primary rRNA binding proteins, it binds specifically to the 5'-end of 16S ribosomal RNA. In Bordetella bronchiseptica (strain ATCC BAA-588 / NCTC 13252 / RB50) (Alcaligenes bronchisepticus), this protein is Small ribosomal subunit protein uS17.